The chain runs to 110 residues: Nucleoid-associated protein YpAngola_A2890 (110 aa).

Positions 90–110 (KEKMASVSNGMQLPPGFKMPF) are disordered.

It belongs to the YbaB/EbfC family. As to quaternary structure, homodimer.

It is found in the cytoplasm. Its subcellular location is the nucleoid. Functionally, binds to DNA and alters its conformation. May be involved in regulation of gene expression, nucleoid organization and DNA protection. The protein is Nucleoid-associated protein YpAngola_A2890 of Yersinia pestis bv. Antiqua (strain Angola).